A 307-amino-acid polypeptide reads, in one-letter code: Homoserine O-acetyltransferase (307 aa).

Cysteine 142 functions as the Acyl-thioester intermediate in the catalytic mechanism. Substrate contacts are provided by lysine 163 and serine 192. Histidine 235 (proton acceptor) is an active-site residue. The active site involves glutamate 237. Arginine 249 lines the substrate pocket.

The protein belongs to the MetA family.

Its subcellular location is the cytoplasm. It catalyses the reaction L-homoserine + acetyl-CoA = O-acetyl-L-homoserine + CoA. Its pathway is amino-acid biosynthesis; L-methionine biosynthesis via de novo pathway; O-acetyl-L-homoserine from L-homoserine: step 1/1. Transfers an acetyl group from acetyl-CoA to L-homoserine, forming acetyl-L-homoserine. This is Homoserine O-acetyltransferase from Rhizobium johnstonii (strain DSM 114642 / LMG 32736 / 3841) (Rhizobium leguminosarum bv. viciae).